The primary structure comprises 479 residues: Aspartyl/glutamyl-tRNA(Asn/Gln) amidotransferase subunit B (479 aa).

This sequence belongs to the GatB/GatE family. GatB subfamily. Heterotrimer of A, B and C subunits.

The catalysed reaction is L-glutamyl-tRNA(Gln) + L-glutamine + ATP + H2O = L-glutaminyl-tRNA(Gln) + L-glutamate + ADP + phosphate + H(+). The enzyme catalyses L-aspartyl-tRNA(Asn) + L-glutamine + ATP + H2O = L-asparaginyl-tRNA(Asn) + L-glutamate + ADP + phosphate + 2 H(+). In terms of biological role, allows the formation of correctly charged Asn-tRNA(Asn) or Gln-tRNA(Gln) through the transamidation of misacylated Asp-tRNA(Asn) or Glu-tRNA(Gln) in organisms which lack either or both of asparaginyl-tRNA or glutaminyl-tRNA synthetases. The reaction takes place in the presence of glutamine and ATP through an activated phospho-Asp-tRNA(Asn) or phospho-Glu-tRNA(Gln). The protein is Aspartyl/glutamyl-tRNA(Asn/Gln) amidotransferase subunit B of Geotalea uraniireducens (strain Rf4) (Geobacter uraniireducens).